Consider the following 446-residue polypeptide: Adenylosuccinate synthetase (446 aa).

GTP contacts are provided by residues 21-27 (GDEGKGK) and 49-51 (GHT). The Proton acceptor role is filled by Asp22. Asp22 and Gly49 together coordinate Mg(2+). IMP contacts are provided by residues 22-25 (DEGK), 47-50 (NAGH), Thr141, Arg155, Gln236, Thr251, and Arg319. The active-site Proton donor is the His50. 315–321 (VTTGRSR) is a substrate binding site. GTP is bound by residues Arg321, 347–349 (KLD), and 429–431 (STS).

It belongs to the adenylosuccinate synthetase family. As to quaternary structure, homodimer. It depends on Mg(2+) as a cofactor.

Its subcellular location is the cytoplasm. It catalyses the reaction IMP + L-aspartate + GTP = N(6)-(1,2-dicarboxyethyl)-AMP + GDP + phosphate + 2 H(+). It participates in purine metabolism; AMP biosynthesis via de novo pathway; AMP from IMP: step 1/2. In terms of biological role, plays an important role in the de novo pathway of purine nucleotide biosynthesis. Catalyzes the first committed step in the biosynthesis of AMP from IMP. The sequence is that of Adenylosuccinate synthetase from Polaromonas naphthalenivorans (strain CJ2).